The sequence spans 198 residues: Holliday junction branch migration complex subunit RuvA (198 aa).

The tract at residues 1–61 is domain I; sequence MILYRIGEII…EYQYATYAFK (61 aa). The interval 62–139 is domain II; sequence DFKERLLFVD…KMISPKDAAK (78 aa). The interval 140–144 is flexible linker; it reads INETT. Residues 144–198 form a domain III region; the sequence is TNTLSEVKETLKMVGFKTKQIDGALSKISSTDDVEKMIEEAIKLMSTQNYESATA.

The protein belongs to the RuvA family. Homotetramer. Forms an RuvA(8)-RuvB(12)-Holliday junction (HJ) complex. HJ DNA is sandwiched between 2 RuvA tetramers; dsDNA enters through RuvA and exits via RuvB. An RuvB hexamer assembles on each DNA strand where it exits the tetramer. Each RuvB hexamer is contacted by two RuvA subunits (via domain III) on 2 adjacent RuvB subunits; this complex drives branch migration. In the full resolvosome a probable DNA-RuvA(4)-RuvB(12)-RuvC(2) complex forms which resolves the HJ.

Its subcellular location is the cytoplasm. In terms of biological role, the RuvA-RuvB-RuvC complex processes Holliday junction (HJ) DNA during genetic recombination and DNA repair, while the RuvA-RuvB complex plays an important role in the rescue of blocked DNA replication forks via replication fork reversal (RFR). RuvA specifically binds to HJ cruciform DNA, conferring on it an open structure. The RuvB hexamer acts as an ATP-dependent pump, pulling dsDNA into and through the RuvAB complex. HJ branch migration allows RuvC to scan DNA until it finds its consensus sequence, where it cleaves and resolves the cruciform DNA. This chain is Holliday junction branch migration complex subunit RuvA, found in Mycoplasmopsis agalactiae (strain NCTC 10123 / CIP 59.7 / PG2) (Mycoplasma agalactiae).